Consider the following 362-residue polypeptide: UDP-N-acetylglucosamine--N-acetylmuramyl-(pentapeptide) pyrophosphoryl-undecaprenol N-acetylglucosamine transferase (362 aa).

UDP-N-acetyl-alpha-D-glucosamine is bound by residues 21–23 (TGG), Asn-129, Arg-170, Ser-198, and Gln-290.

It belongs to the glycosyltransferase 28 family. MurG subfamily.

Its subcellular location is the cell inner membrane. The catalysed reaction is di-trans,octa-cis-undecaprenyl diphospho-N-acetyl-alpha-D-muramoyl-L-alanyl-D-glutamyl-meso-2,6-diaminopimeloyl-D-alanyl-D-alanine + UDP-N-acetyl-alpha-D-glucosamine = di-trans,octa-cis-undecaprenyl diphospho-[N-acetyl-alpha-D-glucosaminyl-(1-&gt;4)]-N-acetyl-alpha-D-muramoyl-L-alanyl-D-glutamyl-meso-2,6-diaminopimeloyl-D-alanyl-D-alanine + UDP + H(+). The protein operates within cell wall biogenesis; peptidoglycan biosynthesis. Cell wall formation. Catalyzes the transfer of a GlcNAc subunit on undecaprenyl-pyrophosphoryl-MurNAc-pentapeptide (lipid intermediate I) to form undecaprenyl-pyrophosphoryl-MurNAc-(pentapeptide)GlcNAc (lipid intermediate II). In Synechococcus sp. (strain JA-3-3Ab) (Cyanobacteria bacterium Yellowstone A-Prime), this protein is UDP-N-acetylglucosamine--N-acetylmuramyl-(pentapeptide) pyrophosphoryl-undecaprenol N-acetylglucosamine transferase.